The chain runs to 21 residues: thr operon leader peptide (21 aa).

The protein belongs to the thr operon leader peptide family.

In terms of biological role, this protein is involved in control of the biosynthesis of threonine. This is thr operon leader peptide from Shigella boydii serotype 18 (strain CDC 3083-94 / BS512).